Reading from the N-terminus, the 379-residue chain is 2-methylcitrate synthase (379 aa).

His-187 is a binding site for substrate. The active site involves His-222. 264–268 (KVMGF) lines the CoA pocket. The active site involves His-270. Residue Arg-279 participates in substrate binding. The active site involves Asp-321. Residues Arg-346 and Arg-365 each coordinate substrate.

It belongs to the citrate synthase family. In terms of assembly, homodimer.

It carries out the reaction propanoyl-CoA + oxaloacetate + H2O = (2S,3S)-2-methylcitrate + CoA + H(+). The catalysed reaction is oxaloacetate + acetyl-CoA + H2O = citrate + CoA + H(+). The protein operates within organic acid metabolism; propanoate degradation. It functions in the pathway carbohydrate metabolism; tricarboxylic acid cycle; isocitrate from oxaloacetate: step 1/2. Functionally, involved in the catabolism of short chain fatty acids (SCFA) via the tricarboxylic acid (TCA)(acetyl degradation route) and via the 2-methylcitrate cycle I (propionate degradation route). Catalyzes the Claisen condensation of propionyl-CoA and oxaloacetate (OAA) to yield 2-methylcitrate (2-MC) and CoA. Also catalyzes the condensation of oxaloacetate with acetyl-CoA but with a lower specificity. This is 2-methylcitrate synthase (gltA) from Antarctic bacterium DS2-3R.